The primary structure comprises 653 residues: Glyceraldehyde-3-phosphate:ferredoxin oxidoreductase (653 aa).

Tungstopterin is bound by residues arginine 70, glycine 89, arginine 196, alanine 197, glycine 199, and arginine 206. Cysteine 333 and cysteine 337 together coordinate [4Fe-4S] cluster. Tungstopterin-binding residues include aspartate 378, aspartate 383, and aspartate 544. Cysteine 549 is a [4Fe-4S] cluster binding site.

It belongs to the AOR/FOR family. In terms of assembly, monomer. [4Fe-4S] cluster serves as cofactor. It depends on tungstopterin as a cofactor.

The enzyme catalyses D-glyceraldehyde 3-phosphate + 2 oxidized [2Fe-2S]-[ferredoxin] + H2O = (2R)-3-phosphoglycerate + 2 reduced [2Fe-2S]-[ferredoxin] + 3 H(+). Its activity is regulated as follows. Sensitive to oxygen. Activity increased by 58%-93% in the presence of acetyl phosphate, 3-phosphoglycerate or 2,3-bisphosphoglycerate at 10 mM concentration. Inhibited by up to 25% in the presence of crotonaldehyde or formaldehyde at 10 mM concentration. Inhibited by up to 50% by sodium dithionate. 3.5-fold increase in activity observed by addition of potassium phosphate or sodium arsenate at 200 mM concentration. Activity enhanced by potassium chloride, sodium citrate or sodium sulfate at 200 mM concentration. Its function is as follows. Catalyzes the oxidation of glyceraldehyde-3-phosphate to 3-phosphoglycerate. Uses ferredoxin as electron acceptor. In vitro can also use benzyl viologen, but not NADP or NAD, as electron acceptor. Probably acts as a glycolytic enzyme in place of glyceraldehyde-3-phosphate dehydrogenase (GAPDH) and phosphoglycerate kinase (PGK) in an unusual Emden-Meyerhof glycolysis. The protein is Glyceraldehyde-3-phosphate:ferredoxin oxidoreductase of Pyrococcus furiosus (strain ATCC 43587 / DSM 3638 / JCM 8422 / Vc1).